The primary structure comprises 127 residues: Mediator of RNA polymerase II transcription subunit 31 (127 aa).

It belongs to the Mediator complex subunit 31 family. In terms of assembly, component of the Mediator complex, which is composed of at least 21 subunits that form three structurally distinct submodules. The Mediator head module contains MED6, MED8, MED11, SRB4/MED17, SRB5/MED18, ROX3/MED19, SRB2/MED20 and SRB6/MED22, the middle module contains MED1, MED4, NUT1/MED5, MED7, CSE2/MED9, NUT2/MED10, SRB7/MED21 and SOH1/MED31, and the tail module contains MED2, PGD1/MED3, RGR1/MED14, GAL11/MED15 and SIN4/MED16. The head and the middle modules interact directly with RNA polymerase II, whereas the elongated tail module interacts with gene-specific regulatory proteins.

The protein resides in the nucleus. In terms of biological role, component of the Mediator complex, a coactivator involved in the regulated transcription of nearly all RNA polymerase II-dependent genes. Mediator functions as a bridge to convey information from gene-specific regulatory proteins to the basal RNA polymerase II transcription machinery. The Mediator complex, having a compact conformation in its free form, is recruited to promoters by direct interactions with regulatory proteins and serves for the assembly of a functional preinitiation complex with RNA polymerase II and the general transcription factors. The Mediator complex unfolds to an extended conformation and partially surrounds RNA polymerase II, specifically interacting with the unphosphorylated form of the C-terminal domain (CTD) of RNA polymerase II. The Mediator complex dissociates from the RNA polymerase II holoenzyme and stays at the promoter when transcriptional elongation begins. In Saccharomyces cerevisiae (strain ATCC 204508 / S288c) (Baker's yeast), this protein is Mediator of RNA polymerase II transcription subunit 31 (SOH1).